The chain runs to 157 residues: DNA gyrase inhibitor (157 aa).

Belongs to the DNA gyrase inhibitor family. In terms of assembly, interacts with DNA gyrase.

The protein resides in the cytoplasm. Its function is as follows. Inhibits the supercoiling activity of DNA gyrase. Acts by inhibiting DNA gyrase at an early step, prior to (or at the step of) binding of DNA by the gyrase. It protects cells against toxins that target DNA gyrase, by inhibiting activity of these toxins and reducing the formation of lethal double-strand breaks in the cell. The polypeptide is DNA gyrase inhibitor (Enterobacter lignolyticus (strain SCF1)).